We begin with the raw amino-acid sequence, 421 residues long: MEF2-activating motif and SAP domain-containing transcriptional regulator (421 aa).

The short motif at 12-28 (IIRSKFRSVLQLRIHRR) is the MEF2-binding element. Disordered regions lie at residues 104–156 (PPEQ…PPSH), 188–296 (KAML…ASLT), and 322–406 (DQVE…ADLS). One can recognise an SAP domain in the interval 165–199 (LEELTVSELRQQLRLRGLPVSGTKAMLLERMRGGT). The span at 191 to 214 (LLERMRGGTPPRERPKPRREDKEA) shows a compositional bias: basic and acidic residues. The transcription activation stretch occupies residues 208 to 421 (RREDKEAAAP…LLWELLPDPW (214 aa)). Residues 230–241 (RLPSTVKASATN) are compositionally biased toward polar residues. Pro residues predominate over residues 260–292 (ASVPAPTPSPALAPTPTPAPVPAPAPAPFPTPP). Residues 347–372 (SPDSEGFSSVFSSSLPSPTSSLSPSP) are compositionally biased toward low complexity.

Interacts with MEF2C. In terms of tissue distribution, expressed in skeletal muscle, brain, placenta and spleen.

The protein resides in the nucleus. Transcriptional coactivator. Stimulates the transcriptional activity of MEF2C. Stimulates MYOD1 activity in part via MEF2, resulting in an enhancement of skeletal muscle differentiation. The protein is MEF2-activating motif and SAP domain-containing transcriptional regulator (Mamstr) of Mus musculus (Mouse).